A 749-amino-acid chain; its full sequence is Protein kinase domain-containing protein ppk32 (749 aa).

One can recognise a Protein kinase domain in the interval 21–317 (IQKENSVQVG…MFELERSPYF (297 aa)). Disordered stretches follow at residues 598 to 677 (KKLQ…VTAK) and 706 to 749 (PLIP…KSLL). Polar residues predominate over residues 602–651 (SKPSSVVPNRITTDPFSSQTKEATSKPSSISPNKATTNIFTSQASLSSQG). The residue at position 632 (Ser632) is a Phosphoserine. Composition is skewed to low complexity over residues 657–670 (SSAS…QRAS) and 721–735 (NRRV…NTVT).

It localises to the cytoplasm. The protein is Protein kinase domain-containing protein ppk32 (ppk32) of Schizosaccharomyces pombe (strain 972 / ATCC 24843) (Fission yeast).